Reading from the N-terminus, the 305-residue chain is Acetyl-coenzyme A carboxylase carboxyl transferase subunit alpha (305 aa).

The 248-residue stretch at 33–280 folds into the CoA carboxyltransferase C-terminal domain; the sequence is AKLESSTALS…KEQILKDLAD (248 aa).

It belongs to the AccA family. Acetyl-CoA carboxylase is a heterohexamer composed of biotin carboxyl carrier protein (AccB), biotin carboxylase (AccC) and two subunits each of ACCase subunit alpha (AccA) and ACCase subunit beta (AccD).

It is found in the cytoplasm. It catalyses the reaction N(6)-carboxybiotinyl-L-lysyl-[protein] + acetyl-CoA = N(6)-biotinyl-L-lysyl-[protein] + malonyl-CoA. It participates in lipid metabolism; malonyl-CoA biosynthesis; malonyl-CoA from acetyl-CoA: step 1/1. In terms of biological role, component of the acetyl coenzyme A carboxylase (ACC) complex. First, biotin carboxylase catalyzes the carboxylation of biotin on its carrier protein (BCCP) and then the CO(2) group is transferred by the carboxyltransferase to acetyl-CoA to form malonyl-CoA. The protein is Acetyl-coenzyme A carboxylase carboxyl transferase subunit alpha of Treponema denticola (strain ATCC 35405 / DSM 14222 / CIP 103919 / JCM 8153 / KCTC 15104).